The chain runs to 507 residues: Anthranilate synthase component 1 (507 aa).

L-tryptophan is bound at residue Ser-65. Ser-81 carries the phosphoserine modification. The residue at position 223 (Thr-223) is a Phosphothreonine. 280–282 lines the L-tryptophan pocket; that stretch reads PYL. Residue 316–317 coordinates chorismate; that stretch reads GT. Residue Glu-343 coordinates Mg(2+). Chorismate contacts are provided by residues Tyr-431, Arg-452, 466-468, and Gly-468; that span reads GGG. Position 481 (Glu-481) interacts with Mg(2+).

Belongs to the anthranilate synthase component I family. Tetramer of two components I and two components II. Mg(2+) is required as a cofactor.

The enzyme catalyses chorismate + L-glutamine = anthranilate + pyruvate + L-glutamate + H(+). It functions in the pathway amino-acid biosynthesis; L-tryptophan biosynthesis; L-tryptophan from chorismate: step 1/5. This chain is Anthranilate synthase component 1 (TRP2), found in Saccharomyces cerevisiae (strain ATCC 204508 / S288c) (Baker's yeast).